Consider the following 3371-residue polypeptide: Protocadherin-23 (3371 aa).

The segment at 1–40 (MSPCGRKMGEGRQQRRAPVGKLLLLPGRRDTPHGRSGSSG) is disordered. The Cytoplasmic portion of the chain corresponds to 1 to 46 (MSPCGRKMGEGRQQRRAPVGKLLLLPGRRDTPHGRSGSSGARTQRS). A helical transmembrane segment spans residues 47-67 (LLWLLVHVWLWAASGSSAQLF). Cadherin domains lie at 65–167 (QLFN…SPRF), 168–296 (PLDS…PPVF), 297–413 (EQDE…RPAI), 424–539 (ARVS…PPLF), 540–663 (SQQH…EPIF), 664–771 (WRQV…HPVF), 772–881 (NPST…RPKY), 877–979 (ERPK…HPAF), 980–1082 (LRTS…SPSW), 1085–1191 (EHLV…SPTF), 1192–1294 (LHDV…RPFF), 1299–1415 (PGKE…IPEN), 1404–1510 (SQNI…SPSF), 1511–1620 (QDEL…NPTF), 1620–1724 (FISF…APVF), 1725–1829 (KQHL…APEF), 1830–1933 (IVSS…SPSF), 1934–2038 (PTLY…DPVL), 2039–2130 (EQNP…VIHM), 2140–2242 (SHHL…SPCF), 2243–2347 (EQSI…APAF), 2347–2447 (FLPS…PPVF), 2448–2549 (SQDF…APEF), 2550–2665 (TVKS…PPNF), 2666–2769 (SSLS…APQF), 2770–2880 (MFSS…EPIF), and 2881–2988 (TQDQ…TPLA). Over 68–2986 (NLTLSVDEGL…NVSFSSEGTP (2919 aa)) the chain is Extracellular. 8 N-linked (GlcNAc...) asparagine glycosylation sites follow: Asn-669, Asn-772, Asn-814, Asn-905, Asn-966, Asn-1038, Asn-1172, and Asn-1275. Asn-1487, Asn-1595, Asn-1617, and Asn-1664 each carry an N-linked (GlcNAc...) asparagine glycan. Asn-1898 carries an N-linked (GlcNAc...) asparagine glycan. Residues Asn-2054, Asn-2070, and Asn-2098 are each glycosylated (N-linked (GlcNAc...) asparagine). N-linked (GlcNAc...) asparagine glycosylation occurs at Asn-2329. Asn-2479, Asn-2497, Asn-2555, and Asn-2664 each carry an N-linked (GlcNAc...) asparagine glycan. Residues Asn-2929 and Asn-2977 are each glycosylated (N-linked (GlcNAc...) asparagine). The helical transmembrane segment at 2987 to 3017 (LAVFASSFSISLVVSFLVFLILICILIVMIL) threads the bilayer. Residues 3018-3371 (RHKQKDTINN…ELKAEDEVQI (354 aa)) lie on the Cytoplasmic side of the membrane. Positions 3117–3140 (KCSDSALSDHESRVPDSGIPRDSD) are enriched in basic and acidic residues. The segment at 3117-3141 (KCSDSALSDHESRVPDSGIPRDSDQ) is disordered.

As to expression, cerebral cortex and testis.

It localises to the membrane. Its function is as follows. Calcium-dependent cell-adhesion protein. The sequence is that of Protocadherin-23 (DCHS2) from Homo sapiens (Human).